The chain runs to 581 residues: Phosphatidylinositol N-acetylglucosaminyltransferase subunit Q (581 aa).

5 helical membrane-spanning segments follow: residues 276–298 (ANML…WLHS), 344–366 (LGRF…SPFI), 381–403 (LTVA…YCFY), 446–468 (LFIG…LYYL), and 478–500 (ITVQ…YSLG).

It belongs to the PIGQ family. In terms of assembly, component of the glycosylphosphatidylinositol-N-acetylglucosaminyltransferase (GPI-GnT) complex composed at least by PIGA, PIGC, PIGH, PIGP, PIGQ, PIGY and DPM2. Interacts with PIGA, PIGH and PIGC.

It localises to the membrane. It participates in glycolipid biosynthesis; glycosylphosphatidylinositol-anchor biosynthesis. Its function is as follows. Part of the glycosylphosphatidylinositol-N-acetylglucosaminyltransferase (GPI-GnT) complex that catalyzes the transfer of N-acetylglucosamine from UDP-N-acetylglucosamine to phosphatidylinositol and participates in the first step of GPI biosynthesis. This chain is Phosphatidylinositol N-acetylglucosaminyltransferase subunit Q, found in Mus musculus (Mouse).